Reading from the N-terminus, the 23-residue chain is Acidic phospholipase A2 Ts-A5 (23 aa).

The cofactor is Ca(2+). Contains 7 disulfide bonds. As to expression, expressed by the venom gland.

The protein localises to the secreted. It catalyses the reaction a 1,2-diacyl-sn-glycero-3-phosphocholine + H2O = a 1-acyl-sn-glycero-3-phosphocholine + a fatty acid + H(+). In terms of biological role, snake venom phospholipase A2 (PLA2) that shows a moderate inhibition of ADP-induced human platelet aggregation when tested on platelet rich plasma. Exhibits high hydrolytic activities and prefers the anionic micelles (dPPC with deoxycholate) to the zwitterionic micelles (dPPC with Triton X-100). PLA2 catalyzes the calcium-dependent hydrolysis of the 2-acyl groups in 3-sn-phosphoglycerides. The chain is Acidic phospholipase A2 Ts-A5 from Trimeresurus stejnegeri (Chinese green tree viper).